Here is a 505-residue protein sequence, read N- to C-terminus: Formate--tetrahydrofolate ligase (505 aa).

The protein belongs to the formate--tetrahydrofolate ligase family.

It carries out the reaction (6S)-5,6,7,8-tetrahydrofolate + formate + ATP = (6R)-10-formyltetrahydrofolate + ADP + phosphate. It participates in one-carbon metabolism; tetrahydrofolate interconversion. The chain is Formate--tetrahydrofolate ligase (fhs) from Bifidobacterium longum (strain NCC 2705).